A 255-amino-acid polypeptide reads, in one-letter code: Pimeloyl-[acyl-carrier protein] methyl ester esterase (255 aa).

Positions 16–242 (LVLLHGWGMN…SSHAPFITEP (227 aa)) constitute an AB hydrolase-1 domain. Substrate-binding positions include tryptophan 22, 82-83 (SL), and 143-147 (FMALQ). Serine 82 serves as the catalytic Nucleophile. Residues aspartate 207 and histidine 235 contribute to the active site. Residue histidine 235 coordinates substrate.

Belongs to the AB hydrolase superfamily. Carboxylesterase BioH family. In terms of assembly, monomer.

Its subcellular location is the cytoplasm. The enzyme catalyses 6-carboxyhexanoyl-[ACP] methyl ester + H2O = 6-carboxyhexanoyl-[ACP] + methanol + H(+). It participates in cofactor biosynthesis; biotin biosynthesis. Functionally, the physiological role of BioH is to remove the methyl group introduced by BioC when the pimeloyl moiety is complete. It allows to synthesize pimeloyl-ACP via the fatty acid synthetic pathway through the hydrolysis of the ester bonds of pimeloyl-ACP esters. This is Pimeloyl-[acyl-carrier protein] methyl ester esterase from Vibrio vulnificus (strain CMCP6).